A 100-amino-acid polypeptide reads, in one-letter code: uncharacterized protein (100 aa).

A compositionally biased stretch (basic and acidic residues) spans 65–91; the sequence is DDRERHLSATGERRREQGFGTSRRKDP. Residues 65–100 form a disordered region; the sequence is DDRERHLSATGERRREQGFGTSRRKDPSLYNWSDVK.

It belongs to the chlamydial CPn_0121/CT_031/TC_0300 family.

This is an uncharacterized protein from Chlamydia trachomatis serovar D (strain ATCC VR-885 / DSM 19411 / UW-3/Cx).